Here is a 215-residue protein sequence, read N- to C-terminus: UPF0502 protein YceH (215 aa).

This sequence belongs to the UPF0502 family.

This chain is UPF0502 protein YceH, found in Salmonella paratyphi C (strain RKS4594).